A 390-amino-acid chain; its full sequence is Chorismate synthase 1 (390 aa).

Residues arginine 39 and arginine 45 each coordinate NADP(+). A disordered region spans residues 95–117 (EQEEKEMKRKVTKPRPGHADLNG). Residues 132-134 (RSS), 253-254 (NA), glycine 298, 313-317 (KPIPT), and arginine 339 contribute to the FMN site.

Belongs to the chorismate synthase family. Homotetramer. FMNH2 is required as a cofactor.

It catalyses the reaction 5-O-(1-carboxyvinyl)-3-phosphoshikimate = chorismate + phosphate. Its pathway is metabolic intermediate biosynthesis; chorismate biosynthesis; chorismate from D-erythrose 4-phosphate and phosphoenolpyruvate: step 7/7. Its function is as follows. Catalyzes the anti-1,4-elimination of the C-3 phosphate and the C-6 proR hydrogen from 5-enolpyruvylshikimate-3-phosphate (EPSP) to yield chorismate, which is the branch point compound that serves as the starting substrate for the three terminal pathways of aromatic amino acid biosynthesis. This reaction introduces a second double bond into the aromatic ring system. This is Chorismate synthase 1 from Bacillus cereus (strain ATCC 10987 / NRS 248).